A 248-amino-acid polypeptide reads, in one-letter code: tRNA (guanine-N(1)-)-methyltransferase (248 aa).

S-adenosyl-L-methionine is bound by residues Gly-113 and 133–138 (IGDFVL).

Belongs to the RNA methyltransferase TrmD family. In terms of assembly, homodimer.

Its subcellular location is the cytoplasm. It catalyses the reaction guanosine(37) in tRNA + S-adenosyl-L-methionine = N(1)-methylguanosine(37) in tRNA + S-adenosyl-L-homocysteine + H(+). Functionally, specifically methylates guanosine-37 in various tRNAs. The polypeptide is tRNA (guanine-N(1)-)-methyltransferase (Dehalococcoides mccartyi (strain ATCC BAA-2100 / JCM 16839 / KCTC 5957 / BAV1)).